A 145-amino-acid polypeptide reads, in one-letter code: Phosphoribosyl-AMP cyclohydrolase (145 aa).

Aspartate 87 contributes to the Mg(2+) binding site. Cysteine 88 serves as a coordination point for Zn(2+). The Mg(2+) site is built by aspartate 89 and aspartate 91. Residues cysteine 104 and cysteine 111 each contribute to the Zn(2+) site.

This sequence belongs to the PRA-CH family. As to quaternary structure, homodimer. Mg(2+) is required as a cofactor. The cofactor is Zn(2+).

The protein localises to the cytoplasm. The enzyme catalyses 1-(5-phospho-beta-D-ribosyl)-5'-AMP + H2O = 1-(5-phospho-beta-D-ribosyl)-5-[(5-phospho-beta-D-ribosylamino)methylideneamino]imidazole-4-carboxamide. Its pathway is amino-acid biosynthesis; L-histidine biosynthesis; L-histidine from 5-phospho-alpha-D-ribose 1-diphosphate: step 3/9. Its function is as follows. Catalyzes the hydrolysis of the adenine ring of phosphoribosyl-AMP. This Nitrobacter winogradskyi (strain ATCC 25391 / DSM 10237 / CIP 104748 / NCIMB 11846 / Nb-255) protein is Phosphoribosyl-AMP cyclohydrolase.